Reading from the N-terminus, the 346-residue chain is MIKVAIVGASGYTGVELIRILHSHPEVAVTCVTSEQSAGRPVSSVFPSLRGRCDIVLENLEPVGIAEKVDIVFTALPHKAAMEVVPTFMKMGKDVIDLSADYRIHDADTYGKWYEPHLNPELLPEAVYGIPELRRAEIAEASLIANPGCYPTSVILGLAPLLKGKVIDPRSIIVDAASGTSGAGRGAKVDNLYCEVNEGFRAYGVGGVHRHIPEIEQELSLLAGNPLNITFTPHLVPMDRGILSTIYSQPTGSVKAADLIALYQAFYDGEPFVRVLPEGVLPSTAHVRGSNFCDIGITVDQRTGRVIVISAIDNLVKGASGQAVQNMNLMCGLPETLGLDLLPVFP.

Residue cysteine 149 is part of the active site.

This sequence belongs to the NAGSA dehydrogenase family. Type 1 subfamily.

It is found in the cytoplasm. It carries out the reaction N-acetyl-L-glutamate 5-semialdehyde + phosphate + NADP(+) = N-acetyl-L-glutamyl 5-phosphate + NADPH + H(+). It functions in the pathway amino-acid biosynthesis; L-arginine biosynthesis; N(2)-acetyl-L-ornithine from L-glutamate: step 3/4. Functionally, catalyzes the NADPH-dependent reduction of N-acetyl-5-glutamyl phosphate to yield N-acetyl-L-glutamate 5-semialdehyde. This is N-acetyl-gamma-glutamyl-phosphate reductase from Citrifermentans bemidjiense (strain ATCC BAA-1014 / DSM 16622 / JCM 12645 / Bem) (Geobacter bemidjiensis).